A 351-amino-acid polypeptide reads, in one-letter code: UDP-3-O-acylglucosamine N-acyltransferase (351 aa).

His-257 functions as the Proton acceptor in the catalytic mechanism.

The protein belongs to the transferase hexapeptide repeat family. LpxD subfamily. In terms of assembly, homotrimer.

It carries out the reaction a UDP-3-O-[(3R)-3-hydroxyacyl]-alpha-D-glucosamine + a (3R)-hydroxyacyl-[ACP] = a UDP-2-N,3-O-bis[(3R)-3-hydroxyacyl]-alpha-D-glucosamine + holo-[ACP] + H(+). It participates in bacterial outer membrane biogenesis; LPS lipid A biosynthesis. In terms of biological role, catalyzes the N-acylation of UDP-3-O-acylglucosamine using 3-hydroxyacyl-ACP as the acyl donor. Is involved in the biosynthesis of lipid A, a phosphorylated glycolipid that anchors the lipopolysaccharide to the outer membrane of the cell. The polypeptide is UDP-3-O-acylglucosamine N-acyltransferase (Methylorubrum populi (strain ATCC BAA-705 / NCIMB 13946 / BJ001) (Methylobacterium populi)).